A 385-amino-acid chain; its full sequence is Elsinochromes biosynthesis cluster protein HP2 (385 aa).

An N-terminal signal peptide occupies residues 1 to 22 (MVLLYILIMVALIPMYMTVVQD). 2 helical membrane passes run 94-114 (TVLS…SMFD) and 148-168 (FYGQ…IVLW). N-linked (GlcNAc...) asparagine glycosylation occurs at Asn-187. Residues 209–229 (SWTFGQIVPIVLLVSPLVAAF) form a helical membrane-spanning segment. N-linked (GlcNAc...) asparagine glycosylation is present at Asn-248. Transmembrane regions (helical) follow at residues 309 to 329 (AILF…LPLA) and 344 to 364 (YYAF…AVPF).

It localises to the membrane. Part of the gene cluster that mediates the biosynthesis of elsinochromes, pigments consisting of at least four interconvertible tautomers (A, B, C and D) that have a core phenolic quinone to which various side chains are attached and which play an important role in fungal pathogenesis. The non-reducing polyketide synthase PKS1 was proposed to iteratively catalyze decarboxylation between acetyl-CoA and malonyl-CoA subunits for polyketide chain elongation. The released polyketide undergoes cyclization to form an aromatic ring, and proceeds via serial modification steps to produce the heptaketide back- bone of elsinochrome. As elsinochrome has a symmetrical structure, two identical heptaketides are fused to form a core 1,2-dihydrobenzo-perylene ring structure, which can then be successively modified to produce the various derivatives of elsinochrome. Some of these reactions may be cooperatively carried out, at least in part, by the products of RDT1, OXR1 and PKS1. PRF1, embedded within the elsinochrome cluster possibly functions to stabilize some of the biosynthetic enzymes required for elsinochrome production. As prefoldin is a hexamer containing 2 a and 4 b subunits, additional prefoldin subunits, whose coding genes may not immediately link to the elsinochrome biosynthetic gene cluster, are required to fulfill the chaperone function. In addition, no methyltransferase-coding gene exists within the biosynthetic gene cluster, even though elsinochrome has four methyl groups at positions C3, C7, C8 and C12. Apparently, the identified gene cluster does not contain the entire entourage of genes responsible for elsinochrome biosynthesis. Once elsinochrome is synthesized, it must be exported outside the fungal cells, which is probably accomplished by the ECT1 transporter, to avoid toxicity. The protein is Elsinochromes biosynthesis cluster protein HP2 of Elsinoe fawcettii (Citrus scab fungus).